Reading from the N-terminus, the 292-residue chain is NAD kinase (292 aa).

Catalysis depends on Asp-72, which acts as the Proton acceptor. NAD(+)-binding positions include 72–73 (DG), 146–147 (NE), His-157, Arg-174, Asp-176, and 187–192 (TAYALS).

The protein belongs to the NAD kinase family. A divalent metal cation serves as cofactor.

The protein localises to the cytoplasm. The catalysed reaction is NAD(+) + ATP = ADP + NADP(+) + H(+). Its function is as follows. Involved in the regulation of the intracellular balance of NAD and NADP, and is a key enzyme in the biosynthesis of NADP. Catalyzes specifically the phosphorylation on 2'-hydroxyl of the adenosine moiety of NAD to yield NADP. The protein is NAD kinase of Shewanella oneidensis (strain ATCC 700550 / JCM 31522 / CIP 106686 / LMG 19005 / NCIMB 14063 / MR-1).